The sequence spans 327 residues: Chlorophenol reductase (327 aa).

Residues 1-24 (MKKTLGIILSISLAFSVLALPIFA) form the signal peptide. The 46-residue stretch at 65-110 (TYYTVVSGDFFWQIAAKHGLTIDALAKLNPQIKNVNLIFPGQKILV) folds into the LysM domain.

Cob(I)alamin serves as cofactor.

The protein localises to the secreted. Its subcellular location is the cell wall. It is found in the cell membrane. Its activity is regulated as follows. Inhibited by sulfide and to a lesser extent by nitrite. Reductive dechlorination of ortho-chlorophenols. Dechlorinates in the ortho position with respect to the hydroxyl group. The chain is Chlorophenol reductase from Desulfitobacterium hafniense (Desulfitobacterium frappieri).